Here is a 251-residue protein sequence, read N- to C-terminus: 5'-nucleotidase SurE (251 aa).

4 residues coordinate a divalent metal cation: Asp8, Asp9, Ser39, and Asn95.

It belongs to the SurE nucleotidase family. A divalent metal cation serves as cofactor.

Its subcellular location is the cytoplasm. The enzyme catalyses a ribonucleoside 5'-phosphate + H2O = a ribonucleoside + phosphate. Nucleotidase that shows phosphatase activity on nucleoside 5'-monophosphates. In Clostridium botulinum (strain Eklund 17B / Type B), this protein is 5'-nucleotidase SurE.